Consider the following 448-residue polypeptide: Glucan 1,3-beta-glucosidase I/II (448 aa).

The first 19 residues, 1–19 (MLSLKTLLCTLLTVSSVLA), serve as a signal peptide directing secretion. The propeptide occupies 20 to 40 (TPVPARDPSSIQFVHEENKKR). Asparagine 165 carries N-linked (GlcNAc...) asparagine glycosylation. Glutamate 232 serves as the catalytic Proton donor. An N-linked (GlcNAc...) asparagine glycan is attached at asparagine 325. Catalysis depends on glutamate 334, which acts as the Nucleophile.

It belongs to the glycosyl hydrolase 5 (cellulase A) family.

It localises to the secreted. The protein resides in the cell wall. The catalysed reaction is Successive hydrolysis of beta-D-glucose units from the non-reducing ends of (1-&gt;3)-beta-D-glucans, releasing alpha-glucose.. Glucanases possibly play a role in cell expansion during growth, in cell-cell fusion during mating, and in spore release during sporulation. This enzyme hydrolyzes both 1,3-beta- and 1,6-beta-linkages and even has beta-glucosidase activity. It could also function biosynthetically as a transglycosylase. The polypeptide is Glucan 1,3-beta-glucosidase I/II (EXG1) (Saccharomyces cerevisiae (strain ATCC 204508 / S288c) (Baker's yeast)).